The chain runs to 474 residues: Proline--tRNA ligase (474 aa).

The protein belongs to the class-II aminoacyl-tRNA synthetase family. ProS type 3 subfamily. In terms of assembly, homodimer.

It localises to the cytoplasm. The enzyme catalyses tRNA(Pro) + L-proline + ATP = L-prolyl-tRNA(Pro) + AMP + diphosphate. Functionally, catalyzes the attachment of proline to tRNA(Pro) in a two-step reaction: proline is first activated by ATP to form Pro-AMP and then transferred to the acceptor end of tRNA(Pro). The protein is Proline--tRNA ligase of Mycoplasma mycoides subsp. mycoides SC (strain CCUG 32753 / NCTC 10114 / PG1).